A 76-amino-acid polypeptide reads, in one-letter code: uncharacterized protein (76 aa).

This is an uncharacterized protein from Escherichia coli O157:H7.